Here is a 366-residue protein sequence, read N- to C-terminus: tRNA/tmRNA (uracil-C(5))-methyltransferase (366 aa).

Positions 190, 218, 223, 239, and 299 each coordinate S-adenosyl-L-methionine. Residue cysteine 324 is the Nucleophile of the active site. The active-site Proton acceptor is glutamate 358.

This sequence belongs to the class I-like SAM-binding methyltransferase superfamily. RNA M5U methyltransferase family. TrmA subfamily.

The catalysed reaction is uridine(54) in tRNA + S-adenosyl-L-methionine = 5-methyluridine(54) in tRNA + S-adenosyl-L-homocysteine + H(+). It carries out the reaction uridine(341) in tmRNA + S-adenosyl-L-methionine = 5-methyluridine(341) in tmRNA + S-adenosyl-L-homocysteine + H(+). Dual-specificity methyltransferase that catalyzes the formation of 5-methyluridine at position 54 (m5U54) in all tRNAs, and that of position 341 (m5U341) in tmRNA (transfer-mRNA). This Salmonella agona (strain SL483) protein is tRNA/tmRNA (uracil-C(5))-methyltransferase.